A 496-amino-acid chain; its full sequence is Catalase-A (496 aa).

Residues His-54 and Asn-128 contribute to the active site. Tyr-338 contributes to the heme binding site. Positions 494-496 match the Microbody targeting signal motif; sequence SNL.

This sequence belongs to the catalase family. The cofactor is heme.

It localises to the peroxisome matrix. It catalyses the reaction 2 H2O2 = O2 + 2 H2O. Catalyzes the degradation of hydrogen peroxide (H(2)O(2)) generated by peroxisomal oxidases to water and oxygen, thereby protecting cells from the toxic effects of hydrogen peroxide. This is Catalase-A (catA) from Dictyostelium discoideum (Social amoeba).